Consider the following 157-residue polypeptide: Transcription elongation factor GreA (157 aa).

It belongs to the GreA/GreB family.

Functionally, necessary for efficient RNA polymerase transcription elongation past template-encoded arresting sites. The arresting sites in DNA have the property of trapping a certain fraction of elongating RNA polymerases that pass through, resulting in locked ternary complexes. Cleavage of the nascent transcript by cleavage factors such as GreA or GreB allows the resumption of elongation from the new 3'terminus. GreA releases sequences of 2 to 3 nucleotides. The chain is Transcription elongation factor GreA from Caulobacter sp. (strain K31).